A 373-amino-acid polypeptide reads, in one-letter code: Muscleblind-like protein 2 (373 aa).

C3H1-type zinc fingers lie at residues 13–41, 47–73, 176–204, and 212–238; these read WLTLEVCRQYQRGTCSRSDEECKFAHPPK, NGRVIACFDSLKGRCSRENCKYLHPPT, TDKLEVCREFQRGNCARGETDCRFAHPAD, and DNTVTVCMDYIKGRCMREKCKYFHPPA.

This sequence belongs to the muscleblind family. In terms of assembly, interacts with ITGA3.

The protein resides in the nucleus. The protein localises to the cytoplasm. Its function is as follows. Mediates pre-mRNA alternative splicing regulation. Acts either as activator or repressor of splicing on specific pre-mRNA targets. Inhibits cardiac troponin-T (TNNT2) pre-mRNA exon inclusion but induces insulin receptor (IR) pre-mRNA exon inclusion in muscle. Antagonizes the alternative splicing activity pattern of CELF proteins. RNA-binding protein that binds to 5'ACACCC-3' core sequence, termed zipcode, within the 3'UTR of ITGA3. Binds to CUG triplet repeat expansion in myotonic dystrophy muscle cells by sequestering the target RNAs. Together with RNA binding proteins RBPMS and RBFOX2, activates vascular smooth muscle cells alternative splicing events. Regulates NCOR2 alternative splicing. Seems to regulate expression and localization of ITGA3 by transporting it from the nucleus to cytoplasm at adhesion plaques. May play a role in myotonic dystrophy pathophysiology (DM). In Mus musculus (Mouse), this protein is Muscleblind-like protein 2 (Mbnl2).